An 829-amino-acid chain; its full sequence is Ectonucleotide pyrophosphatase/phosphodiesterase C27A7.1 (829 aa).

A helical; Signal-anchor for type II membrane protein transmembrane segment spans residues 54–74 (VIGIAVLLLAMVVIVVIVLLL). Residue threonine 224 is the Nucleophile of the active site. N-linked (GlcNAc...) asparagine glycans are attached at residues asparagine 296, asparagine 424, asparagine 514, asparagine 542, asparagine 582, asparagine 649, asparagine 733, and asparagine 748. Residues cysteine 439 and cysteine 782 are joined by a disulfide bond.

The protein belongs to the nucleotide pyrophosphatase/phosphodiesterase family.

The protein resides in the membrane. Functionally, probable phosphodiesterase. In Caenorhabditis elegans, this protein is Ectonucleotide pyrophosphatase/phosphodiesterase C27A7.1.